Here is a 288-residue protein sequence, read N- to C-terminus: MFGNLKKKLSSAIQEGLVISENLQQQYRQRVSSGNSGSSQASGITTPISPLGLNESLSSSRSSSLSLSAPFQLTDGVPSHLNVAAGCSLLAKYEDDWQQIHGANEKNAEKAAQIANQISGIQDQASHQHRIMSELNSSLAGIPTLIAQLQNSSQVLNSLEEMGKQLEIELEKLEDLREECELQEFILEQQFQLSRHKQKKLNELEQYRQQIAQKHQSKIKDQEQTLLKLQRERQAVFDDAFREDMEEYKQRGQLTKIQTTSNKLALEEVVLEANEVETKDALEQFLNG.

Residues 147–239 (AQLQNSSQVL…QRERQAVFDD (93 aa)) adopt a coiled-coil conformation.

Belongs to the dysbindin family. As to quaternary structure, component of the biogenesis of lysosome-related organelles complex-1 (BLOC-1) composed of Blos1, Blos2, Blos3, Blos4, Dysb, Muted, Pldn and Snapin. Interacts with Pldn and Snapin.

Component of the biogenesis of lysosome-related organelles complex-1 (BLOC-1) involved in pigment granule biogenesis and membrane trafficking in synapses. In response to high synaptic activity at neuromuscular junctions, stabilizes Pldn protein levels and, together with Pldn, plays a role in promoting efficient synaptic vesicle recycling and re-formation through early endosomes. The sequence is that of Dysbindin protein homolog from Drosophila melanogaster (Fruit fly).